The primary structure comprises 88 residues: Phosphocarrier protein HPr (88 aa).

The HPr domain maps to Met1–Glu88. His15 acts as the Pros-phosphohistidine intermediate in catalysis. A Phosphoserine; by HPrK/P modification is found at Ser46.

It belongs to the HPr family.

The protein localises to the cytoplasm. Phosphorylation on Ser-46 inhibits the phosphoryl transfer from enzyme I to HPr. Functionally, general (non sugar-specific) component of the phosphoenolpyruvate-dependent sugar phosphotransferase system (sugar PTS). This major carbohydrate active-transport system catalyzes the phosphorylation of incoming sugar substrates concomitantly with their translocation across the cell membrane. The phosphoryl group from phosphoenolpyruvate (PEP) is transferred to the phosphoryl carrier protein HPr by enzyme I. Phospho-HPr then transfers it to the PTS EIIA domain. In terms of biological role, P-Ser-HPr interacts with the catabolite control protein A (CcpA), forming a complex that binds to DNA at the catabolite response elements cre, operator sites preceding a large number of catabolite-regulated genes. Thus, P-Ser-HPr is a corepressor in carbon catabolite repression (CCR), a mechanism that allows bacteria to coordinate and optimize the utilization of available carbon sources. P-Ser-HPr also plays a role in inducer exclusion, in which it probably interacts with several non-PTS permeases and inhibits their transport activity. This chain is Phosphocarrier protein HPr (ptsH), found in Staphylococcus carnosus.